The chain runs to 804 residues: MSKLSFRARALDAAKPLPIYRGKDMPDLNDCVSINRAVPQMPTGMEKEEESEHHLQRAISAQQVFREKKESMVIPVPEAESNVHYYSRLYKGEFKQPKQFIHIQPFNLDYEQPDYDMDSEDETLLNRLNRKMEIKPLQFEIMIDRLEKASSNQLVTLQEAKLLLNEDDYLIKSVYDYWVRKRKNCRGPSLIPQVKQEKRDGSTNNDPYVAFRRRTEKMQTRKNRKNDEVSYEKMLKLRREFSRAITILEMIKRREKTKRELLHLTLEVVEKRYNLGDFGGEILNEIKIPKVEKEIHVIPPSLHNGNHHKVPECKVKNTHHPSVKDEVLEIVRLKKKYPKKPKAETLVTPQPQATSEPLAVINKSDIKQYDFQSSDDDEFPQVPSPLSELEEENDPDGSYAFRRRTGCQYYAPRLDQMNDTPETTDLSGLARHRYRHCLTTLTVPRRCIGFARKRLGRGGRVIMDRLSTEHDSILKQIDPEMLSGFSSSSHVAQPPSSPSRTNASDRHCENRLSLPEILSNIKSCRLQCFQPRLLHTQDSDREECTSRLGQAVNVKRVSAALLNTSKNGITVTGGITEEQFQTHQQQLVQMQRQQLAQLQQKQQSQQSLQQSHPKAQGSAKSDCMSKTLDSASALFAASAVVNSPTPGRSEVNKDQNAGHSNLNGVVQPSGTAKTLYSTNMALSSSPGISTVQLVRTVGHPTTNHLIPTLCTSNPQTLTMGNSCLANTVHLNNVSVVSPVNVHINTRTSAPSPTALKLATVAASMDRVPKVTPSSAISSIARENHEPERLGLNGIADTTVAMEVT.

Disordered stretches follow at residues 372–398 (QSSD…PDGS), 484–507 (GFSS…SDRH), 602–623 (QQSQ…KSDC), and 642–669 (NSPT…VQPS). The span at 602 to 611 (QQSQQSLQQS) shows a compositional bias: low complexity. Positions 654–669 (DQNAGHSNLNGVVQPS) are enriched in polar residues.

Belongs to the enhancer of polycomb family.

It localises to the nucleus. May play a role in transcription or DNA repair. The sequence is that of Enhancer of polycomb homolog 2 (epc2) from Xenopus tropicalis (Western clawed frog).